The primary structure comprises 289 residues: Probable ABC transporter permease protein BruAb2_0483 (289 aa).

The next 6 membrane-spanning stretches (helical) occupy residues 9–29 (FLIL…VVHL), 70–90 (VWTV…AIIL), 99–119 (VARV…AIFW), 144–166 (IQWL…LVTV), 213–233 (IAIV…WVMT), and 258–278 (FGEA…FTVI). An ABC transmembrane type-1 domain is found at 65 to 279 (LWRTAVWTVA…AILLVFTVIY (215 aa)).

The protein belongs to the binding-protein-dependent transport system permease family. The complex is composed of two ATP-binding proteins (BruAb2_0487), two transmembrane proteins (BruAb2_0483) and a solute-binding protein (BruAb2_0484).

It is found in the cell inner membrane. In terms of biological role, probably part of an ABC transporter complex. Probably responsible for the translocation of the substrate across the membrane. The chain is Probable ABC transporter permease protein BruAb2_0483 from Brucella abortus biovar 1 (strain 9-941).